The following is a 301-amino-acid chain: tRNA pseudouridine synthase B (301 aa).

Asp-38 serves as the catalytic Nucleophile.

It belongs to the pseudouridine synthase TruB family. Type 1 subfamily.

The catalysed reaction is uridine(55) in tRNA = pseudouridine(55) in tRNA. In terms of biological role, responsible for synthesis of pseudouridine from uracil-55 in the psi GC loop of transfer RNAs. This Limosilactobacillus reuteri (strain DSM 20016) (Lactobacillus reuteri) protein is tRNA pseudouridine synthase B.